We begin with the raw amino-acid sequence, 174 residues long: Ribosome maturation factor RimP (174 aa).

The protein belongs to the RimP family.

It is found in the cytoplasm. Required for maturation of 30S ribosomal subunits. This chain is Ribosome maturation factor RimP, found in Acinetobacter baylyi (strain ATCC 33305 / BD413 / ADP1).